Consider the following 281-residue polypeptide: MFPAQEEADRTVFVGNLEARVREEILYELFLQAGPLTKVTICKDREGKPKSFGFVCFKHPESVSYAIALLNGIRLYGRPINVQYRFGSSRSSEPANQSFESCVKINSHNYRNEEMLVGRSSFPMQYFPINNTSLPQEYFLFQKMQWHVYNPVLQLPYYEMTAPLPNSASVSSSLNHVPDLEAGPSSYKWTHQQPSDSDLYQMTAPLPNSASVSSSLNHVPDLEAGPSSYKWTHQQPSDSDLYQMNKRKRQKQTSDSDSSTDNNRGNECSQKFRKSKKKKRY.

The RRM domain maps to 10–87 (RTVFVGNLEA…RPINVQYRFG (78 aa)). The interval 184–281 (PSSYKWTHQQ…FRKSKKKKRY (98 aa)) is disordered. Polar residues-rich tracts occupy residues 187–217 (YKWTHQQPSDSDLYQMTAPLPNSASVSSSLN) and 229–242 (YKWTHQQPSDSDLY). A Bipartite nuclear localization signal motif is present at residues 245 to 280 (NKRKRQKQTSDSDSSTDNNRGNECSQKFRKSKKKKR). A compositionally biased stretch (basic residues) spans 271–281 (KFRKSKKKKRY).

In terms of assembly, homodimer. As to expression, expressed in brain, hippocampus, prefrontal cortex, cerebellum, spinal cord, testis, mammary gland, spleen and kidney. Also expressed in fetal brain.

The protein resides in the nucleus. Its subcellular location is the nucleoplasm. It is found in the nucleus speckle. Its function is as follows. Tissue-specific splicing factor with potential implication in the regulation of alternative splicing during neuron and germ cell differentiation. Antagonizes SRSF1-mediated BCL-X splicing. May affect the choice of alternative 5' splice sites by binding to specific sequences in exons and antagonizing the SR protein SRSF1. The sequence is that of Splicing regulator RBM11 from Homo sapiens (Human).